We begin with the raw amino-acid sequence, 354 residues long: MEKRIVCLAGDGVGPEVMESAKGVLHMVERLYGHHFHLQDEHFGGVAIDLTGQPLPQRTLAACLASDAVLLGAVGGPRWDGAKERPEKGLLALRKGLGVFANVRPVTVESATAHLSPLKKADEIDFVVVRELTGGIYFSYPKKRTDEVATDTLTYHRHEIERIVSYAFQLASKRKKKVTSIDKANVLESSKLWRTVTEEVALRYPDVELEHILVDAAAMELIRNPGRFDVIVTENLFGDILSDEASVLAGSLGMLPSASHAEKGPSLYEPIHGSAPDIAGKNKANPIAMMRSVAMMLGQSFGLTREGCAIEEAISAVLKSGKCTADIGGAETTTSFTKAVMQEMEEQALVGRGR.

76–87 serves as a coordination point for NAD(+); it reads GPRWDGAKERPE. Residues Arg-94, Arg-104, Arg-130, and Asp-215 each coordinate substrate. Residues Asp-215, Asp-239, and Asp-243 each contribute to the Mg(2+) site. 273–285 provides a ligand contact to NAD(+); sequence GSAPDIAGKNKAN.

The protein belongs to the isocitrate and isopropylmalate dehydrogenases family. LeuB type 1 subfamily. As to quaternary structure, homodimer. Requires Mg(2+) as cofactor. The cofactor is Mn(2+).

Its subcellular location is the cytoplasm. The enzyme catalyses (2R,3S)-3-isopropylmalate + NAD(+) = 4-methyl-2-oxopentanoate + CO2 + NADH. The protein operates within amino-acid biosynthesis; L-leucine biosynthesis; L-leucine from 3-methyl-2-oxobutanoate: step 3/4. Functionally, catalyzes the oxidation of 3-carboxy-2-hydroxy-4-methylpentanoate (3-isopropylmalate) to 3-carboxy-4-methyl-2-oxopentanoate. The product decarboxylates to 4-methyl-2 oxopentanoate. This is 3-isopropylmalate dehydrogenase from Bacillus thuringiensis subsp. konkukian (strain 97-27).